Here is a 357-residue protein sequence, read N- to C-terminus: Phosphate acyltransferase (357 aa).

This sequence belongs to the PlsX family. Homodimer. Probably interacts with PlsY.

The protein resides in the cytoplasm. The catalysed reaction is a fatty acyl-[ACP] + phosphate = an acyl phosphate + holo-[ACP]. It participates in lipid metabolism; phospholipid metabolism. Its function is as follows. Catalyzes the reversible formation of acyl-phosphate (acyl-PO(4)) from acyl-[acyl-carrier-protein] (acyl-ACP). This enzyme utilizes acyl-ACP as fatty acyl donor, but not acyl-CoA. The protein is Phosphate acyltransferase of Herminiimonas arsenicoxydans.